Reading from the N-terminus, the 1463-residue chain is Probable oxidoreductase PXDNL (1463 aa).

The N-terminal stretch at 1–23 is a signal peptide; that stretch reads MEPRLFCWTTLFLLAGWCLPGLP. The LRRNT domain maps to 24–50; it reads CPSRCLCFKSTVRCMHLMLDHIPQVPQ. LRR repeat units follow at residues 51–72, 75–96, 99–120, 123–144, and 147–168; these read QTTV…AFKK, NLNT…AFEG, NLLY…TFKG, SLEH…TFGD, and RLER…SFSN. Positions 180–233 constitute an LRRCT domain; sequence NALVCDCDLMWLGELLQGFAQHGHTQAAATCEYPRRLHGRAVASVTVEEFNCQS. Ig-like C2-type domains lie at 234–322, 330–414, 419–504, and 507–596; these read PRIT…AMLR, PSFV…ANII, PQFT…VQLT, and PKAL…MFLT. Cystine bridges form between Cys255–Cys305, Cys351–Cys398, Cys440–Cys488, Cys532–Cys580, and Cys718–Cys734. The N-linked (GlcNAc...) asparagine glycan is linked to Asn387. His812 serves as the catalytic Proton acceptor. A Ca(2+)-binding site is contributed by Asp813. Cystine bridges form between Cys832-Cys842 and Cys836-Cys859. Residues Thr891, Tyr893, Asp895, and Ser897 each coordinate Ca(2+). Cys944 and Cys953 are disulfide-bonded. His1057 is a binding site for heme b. 2 disulfide bridges follow: Cys1160–Cys1217 and Cys1258–Cys1284. Residues 1393–1451 form the VWFC domain; that stretch reads AGCTDVRGVPRKAEERWMKEDCTHCICESGQVTCVVEICPPAPCPSPELVKGTCCPVCR.

Belongs to the peroxidase family. XPO subfamily. Interacts with PXDN; this interaction inhibits the peroxidase activity of PXDN. It depends on heme b as a cofactor. Post-translationally, phosphorylation by SRC on tyrosine residues is required for targeting to polysomes. As to expression, the 57 kDa isoform PMR1 is the only form detected at protein levels in human cell lines. Expressed in heart.

Its subcellular location is the secreted. The protein localises to the endoplasmic reticulum. It localises to the cell membrane. It is found in the cytoplasm. Probable oxidoreductase. Lacks peroxidase activity. Inhibits the peroxidase activity of PXDN through its interaction. In terms of biological role, endonuclease selectively degrading some target mRNAs while they are engaged by translating ribosomes, among which albumin and beta-globin mRNAs. The chain is Probable oxidoreductase PXDNL from Homo sapiens (Human).